The chain runs to 766 residues: Phosphoribosylformylglycinamidine synthase subunit PurL (766 aa).

His-49 is an active-site residue. Residues Tyr-52 and Lys-91 each contribute to the ATP site. Glu-93 is a binding site for Mg(2+). Substrate contacts are provided by residues 94–97 (SHNH) and Arg-116. The Proton acceptor role is filled by His-95. Asp-117 contributes to the Mg(2+) binding site. Substrate is bound at residue Gln-240. Asp-268 is a binding site for Mg(2+). 312 to 314 (ESQ) contributes to the substrate binding site. Asp-508 and Gly-545 together coordinate ATP. A Mg(2+)-binding site is contributed by Asn-546. Ser-548 is a substrate binding site.

This sequence belongs to the FGAMS family. Monomer. Part of the FGAM synthase complex composed of 1 PurL, 1 PurQ and 2 PurS subunits.

It is found in the cytoplasm. The enzyme catalyses N(2)-formyl-N(1)-(5-phospho-beta-D-ribosyl)glycinamide + L-glutamine + ATP + H2O = 2-formamido-N(1)-(5-O-phospho-beta-D-ribosyl)acetamidine + L-glutamate + ADP + phosphate + H(+). The protein operates within purine metabolism; IMP biosynthesis via de novo pathway; 5-amino-1-(5-phospho-D-ribosyl)imidazole from N(2)-formyl-N(1)-(5-phospho-D-ribosyl)glycinamide: step 1/2. In terms of biological role, part of the phosphoribosylformylglycinamidine synthase complex involved in the purines biosynthetic pathway. Catalyzes the ATP-dependent conversion of formylglycinamide ribonucleotide (FGAR) and glutamine to yield formylglycinamidine ribonucleotide (FGAM) and glutamate. The FGAM synthase complex is composed of three subunits. PurQ produces an ammonia molecule by converting glutamine to glutamate. PurL transfers the ammonia molecule to FGAR to form FGAM in an ATP-dependent manner. PurS interacts with PurQ and PurL and is thought to assist in the transfer of the ammonia molecule from PurQ to PurL. The sequence is that of Phosphoribosylformylglycinamidine synthase subunit PurL from Synechococcus sp. (strain CC9902).